Consider the following 167-residue polypeptide: Glucose-6-phosphate isomerase (167 aa).

Catalysis depends on Glu-54, which acts as the Proton donor. Residue His-85 is part of the active site.

Belongs to the GPI family.

Its subcellular location is the cytoplasm. The catalysed reaction is alpha-D-glucose 6-phosphate = beta-D-fructose 6-phosphate. It participates in carbohydrate biosynthesis; gluconeogenesis. The protein operates within carbohydrate degradation; glycolysis; D-glyceraldehyde 3-phosphate and glycerone phosphate from D-glucose: step 2/4. Functionally, catalyzes the reversible isomerization of glucose-6-phosphate to fructose-6-phosphate. This is Glucose-6-phosphate isomerase from Klebsiella oxytoca.